Consider the following 49-residue polypeptide: Large ribosomal subunit protein bL33B (49 aa).

This sequence belongs to the bacterial ribosomal protein bL33 family.

The protein is Large ribosomal subunit protein bL33B of Geobacillus kaustophilus (strain HTA426).